We begin with the raw amino-acid sequence, 217 residues long: Thiamine-phosphate synthase (217 aa).

4-amino-2-methyl-5-(diphosphooxymethyl)pyrimidine-binding positions include 41-45 (QYRDK) and N76. Residues D77 and D96 each contribute to the Mg(2+) site. S115 provides a ligand contact to 4-amino-2-methyl-5-(diphosphooxymethyl)pyrimidine. Position 142-144 (142-144 (SPS)) interacts with 2-[(2R,5Z)-2-carboxy-4-methylthiazol-5(2H)-ylidene]ethyl phosphate. K145 lines the 4-amino-2-methyl-5-(diphosphooxymethyl)pyrimidine pocket. 2-[(2R,5Z)-2-carboxy-4-methylthiazol-5(2H)-ylidene]ethyl phosphate is bound by residues G172 and 192-193 (IS).

Belongs to the thiamine-phosphate synthase family. Mg(2+) is required as a cofactor.

It carries out the reaction 2-[(2R,5Z)-2-carboxy-4-methylthiazol-5(2H)-ylidene]ethyl phosphate + 4-amino-2-methyl-5-(diphosphooxymethyl)pyrimidine + 2 H(+) = thiamine phosphate + CO2 + diphosphate. The enzyme catalyses 2-(2-carboxy-4-methylthiazol-5-yl)ethyl phosphate + 4-amino-2-methyl-5-(diphosphooxymethyl)pyrimidine + 2 H(+) = thiamine phosphate + CO2 + diphosphate. It catalyses the reaction 4-methyl-5-(2-phosphooxyethyl)-thiazole + 4-amino-2-methyl-5-(diphosphooxymethyl)pyrimidine + H(+) = thiamine phosphate + diphosphate. The protein operates within cofactor biosynthesis; thiamine diphosphate biosynthesis; thiamine phosphate from 4-amino-2-methyl-5-diphosphomethylpyrimidine and 4-methyl-5-(2-phosphoethyl)-thiazole: step 1/1. Condenses 4-methyl-5-(beta-hydroxyethyl)thiazole monophosphate (THZ-P) and 2-methyl-4-amino-5-hydroxymethyl pyrimidine pyrophosphate (HMP-PP) to form thiamine monophosphate (TMP). The sequence is that of Thiamine-phosphate synthase from Acidithiobacillus ferrooxidans (strain ATCC 23270 / DSM 14882 / CIP 104768 / NCIMB 8455) (Ferrobacillus ferrooxidans (strain ATCC 23270)).